We begin with the raw amino-acid sequence, 174 residues long: Gamma-crystallin E (174 aa).

2 consecutive Beta/gamma crystallin 'Greek key' domains span residues 2–40 (GKIT…RVDS) and 41–83 (GCWM…RLIP). The interval 84–87 (HSSS) is connecting peptide. Beta/gamma crystallin 'Greek key' domains lie at 88 to 128 (HRIK…HVME) and 129 to 171 (GYWV…RRIM).

It belongs to the beta/gamma-crystallin family. As to expression, detected in the superior olivary complex of the auditory hindbrain.

Its function is as follows. Crystallins are the dominant structural components of the vertebrate eye lens. This chain is Gamma-crystallin E (Cryge), found in Mus musculus (Mouse).